The following is a 33-amino-acid chain: GIFDVVKGVLKGVGKNVAGSLLEQLKCKLSGGC.

A disulfide bond links C27 and C33.

As to expression, expressed by the skin glands.

It localises to the secreted. Functionally, antimicrobial peptide. A mixture of Brevinin-2DYc/2DYd is active against the Gram-positive bacterium S.aureus (MIC=15 uM) and the Gram-negative bacterium E.coli (MIC=15 uM). The sequence is that of Brevinin-2DYd from Rana dybowskii (Dybovsky's frog).